The chain runs to 126 residues: Small ribosomal subunit protein uS11 (126 aa).

This sequence belongs to the universal ribosomal protein uS11 family. As to quaternary structure, part of the 30S ribosomal subunit.

Its function is as follows. Located on the platform of the 30S subunit. This is Small ribosomal subunit protein uS11 from Methanosarcina barkeri (strain Fusaro / DSM 804).